We begin with the raw amino-acid sequence, 414 residues long: Multifunctional CCA protein (414 aa).

ATP-binding residues include G8 and R11. Positions 8 and 11 each coordinate CTP. Mg(2+) contacts are provided by D21 and D23. The ATP site is built by R91, R137, and R140. Residues R91, R137, and R140 each coordinate CTP. The HD domain maps to 226 to 327 (TGVHVMMVVD…VTLFERCDAF (102 aa)).

Belongs to the tRNA nucleotidyltransferase/poly(A) polymerase family. Bacterial CCA-adding enzyme type 1 subfamily. Monomer. Can also form homodimers and oligomers. Requires Mg(2+) as cofactor. It depends on Ni(2+) as a cofactor.

The enzyme catalyses a tRNA precursor + 2 CTP + ATP = a tRNA with a 3' CCA end + 3 diphosphate. The catalysed reaction is a tRNA with a 3' CCA end + 2 CTP + ATP = a tRNA with a 3' CCACCA end + 3 diphosphate. In terms of biological role, catalyzes the addition and repair of the essential 3'-terminal CCA sequence in tRNAs without using a nucleic acid template. Adds these three nucleotides in the order of C, C, and A to the tRNA nucleotide-73, using CTP and ATP as substrates and producing inorganic pyrophosphate. tRNA 3'-terminal CCA addition is required both for tRNA processing and repair. Also involved in tRNA surveillance by mediating tandem CCA addition to generate a CCACCA at the 3' terminus of unstable tRNAs. While stable tRNAs receive only 3'-terminal CCA, unstable tRNAs are marked with CCACCA and rapidly degraded. The chain is Multifunctional CCA protein from Herminiimonas arsenicoxydans.